The following is a 255-amino-acid chain: MTSADPLAALADNYIWMARDASGTTAFAVDPGDAAVVEAWLHDHQLRLAAVLVTHHHGDHTGGVAELAERHRVPVFGPATETIPTVDHPITGGEHFSLEGFGEFRVLDCPGHTAGHIAYLWEGHLFSGDALFAGGCGRVFEGTAGQMHASLQHLAALPADTRVCCGHEYTVKNLEFAHCADPKNDRLAQRLQAARDARAAGQPTVPSTLAEELATNPFLRTDCPELRRAAQDWCGRDLDQAYEVFATLRRWKDTT.

Zn(2+) is bound by residues histidine 55, histidine 57, aspartate 59, histidine 60, histidine 112, aspartate 129, and histidine 167.

The protein belongs to the metallo-beta-lactamase superfamily. Glyoxalase II family. As to quaternary structure, monomer. Requires Zn(2+) as cofactor.

The catalysed reaction is an S-(2-hydroxyacyl)glutathione + H2O = a 2-hydroxy carboxylate + glutathione + H(+). It functions in the pathway secondary metabolite metabolism; methylglyoxal degradation; (R)-lactate from methylglyoxal: step 2/2. Functionally, thiolesterase that catalyzes the hydrolysis of S-D-lactoyl-glutathione to form glutathione and D-lactic acid. In Halorhodospira halophila (strain DSM 244 / SL1) (Ectothiorhodospira halophila (strain DSM 244 / SL1)), this protein is Hydroxyacylglutathione hydrolase.